The primary structure comprises 311 residues: Putative pyruvate, phosphate dikinase regulatory protein (311 aa).

Residue 180 to 187 (GVSRSSKT) participates in ADP binding.

Belongs to the pyruvate, phosphate/water dikinase regulatory protein family. PDRP subfamily.

It catalyses the reaction N(tele)-phospho-L-histidyl/L-threonyl-[pyruvate, phosphate dikinase] + ADP = N(tele)-phospho-L-histidyl/O-phospho-L-threonyl-[pyruvate, phosphate dikinase] + AMP + H(+). The enzyme catalyses N(tele)-phospho-L-histidyl/O-phospho-L-threonyl-[pyruvate, phosphate dikinase] + phosphate + H(+) = N(tele)-phospho-L-histidyl/L-threonyl-[pyruvate, phosphate dikinase] + diphosphate. Its function is as follows. Bifunctional serine/threonine kinase and phosphorylase involved in the regulation of the pyruvate, phosphate dikinase (PPDK) by catalyzing its phosphorylation/dephosphorylation. This chain is Putative pyruvate, phosphate dikinase regulatory protein, found in Paramagnetospirillum magneticum (strain ATCC 700264 / AMB-1) (Magnetospirillum magneticum).